The sequence spans 352 residues: MASLRGVSRSARALQPFSAQFAVRRCASTQTGAGAAAATPKSNIPDLAELETRSALDAPIPSEEDKKEFRPWKRAADRKARLPSSRYQYHPPKYNRGPLHPIQSPPSSDPIARDFVPGPFNMPRLKETFRTVMASDLMTLAYIHTPPGTPKKEPTERLRAWEGDSPYFANRARRAPRGAPELPIRERDISFRNIPEIKEITVSTFVPLGLKNPDLLIVARAVLLAMTGTMPEMTRSKNNVVQWQLQANKPAGCKTTIYGNAAWEFMDRLIHLVLPRIKDWKGVPASTGDGSGNVQFGLNPEDVQLFPEVECNYDMYPAKMIPGCHIAIKTTATSDRQAKLLLQSLGVPFYSN.

A disordered region spans residues 28-109 (STQTGAGAAA…HPIQSPPSSD (82 aa)). A compositionally biased stretch (basic and acidic residues) spans 63–80 (EEDKKEFRPWKRAADRKA).

The protein belongs to the universal ribosomal protein uL5 family. Component of the mitochondrial large ribosomal subunit (mt-LSU). Mature N.crassa 74S mitochondrial ribosomes consist of a small (37S) and a large (54S) subunit. The 37S small subunit contains a 16S ribosomal RNA (16S mt-rRNA) and 32 different proteins. The 54S large subunit contains a 23S rRNA (23S mt-rRNA) and 42 different proteins. Unlike bacterial L5, uL5m does not bind zinc.

It localises to the mitochondrion. In terms of biological role, component of the mitochondrial ribosome (mitoribosome), a dedicated translation machinery responsible for the synthesis of mitochondrial genome-encoded proteins, including at least some of the essential transmembrane subunits of the mitochondrial respiratory chain. The mitoribosomes are attached to the mitochondrial inner membrane and translation products are cotranslationally integrated into the membrane. In Neurospora crassa (strain ATCC 24698 / 74-OR23-1A / CBS 708.71 / DSM 1257 / FGSC 987), this protein is Large ribosomal subunit protein uL5m (mrpl7).